A 165-amino-acid polypeptide reads, in one-letter code: Type II secretion system protein M (165 aa).

Residues 1-22 lie on the Cytoplasmic side of the membrane; it reads MKELLAPVQAWWRSVTPREQKM. A helical membrane pass occupies residues 23 to 43; the sequence is VMGMGALTVLAIAYWGIWQPL. Over 44–165 the chain is Periplasmic; it reads SERTAQAQAR…VKRLQLKRGG (122 aa).

Belongs to the GSP M family. As to quaternary structure, type II secretion system is composed of four main components: the outer membrane complex, the inner membrane complex, the cytoplasmic secretion ATPase and the periplasm-spanning pseudopilus. Forms homodimers. Interacts with EpsL/GspL. Interacts with EpsE/GspE. Interacts with EpsF/GspF.

It localises to the cell inner membrane. Inner membrane component of the type II secretion system required for the energy-dependent secretion of extracellular factors such as proteases and toxins from the periplasm. Plays a role in the complex assembly and recruits EpsL resulting in a stable complex in the inner membrane. Provides thus a link between the energy-providing EpsE protein in the cytoplasm and the rest of the T2SS machinery. The protein is Type II secretion system protein M (epsM) of Vibrio cholerae serotype O1 (strain ATCC 39315 / El Tor Inaba N16961).